Here is a 344-residue protein sequence, read N- to C-terminus: NADH-quinone oxidoreductase subunit H 2 (344 aa).

8 consecutive transmembrane segments (helical) span residues 13–33, 82–102, 116–136, 161–181, 188–208, 240–260, 280–300, and 319–339; these read LPILFKIVAIVLPLILIVAWL, ILFLLAPVLAIAPALAVWAVI, ALLYILAIGSMSVYGIILAGW, MGFALVGVLIAGGSLNLGEIV, FWHWFWLPLFPLFLIYFISGV, LFFLAEYIEMILVSTLAALMF, VPGIVWLLIKTAIFLFFYLWF, and VFIPITIVWLLVVGGARVAQL.

This sequence belongs to the complex I subunit 1 family. As to quaternary structure, NDH-1 is composed of 14 different subunits. Subunits NuoA, H, J, K, L, M, N constitute the membrane sector of the complex.

Its subcellular location is the cell inner membrane. It catalyses the reaction a quinone + NADH + 5 H(+)(in) = a quinol + NAD(+) + 4 H(+)(out). Functionally, NDH-1 shuttles electrons from NADH, via FMN and iron-sulfur (Fe-S) centers, to quinones in the respiratory chain. The immediate electron acceptor for the enzyme in this species is believed to be ubiquinone. Couples the redox reaction to proton translocation (for every two electrons transferred, four hydrogen ions are translocated across the cytoplasmic membrane), and thus conserves the redox energy in a proton gradient. This subunit may bind ubiquinone. The protein is NADH-quinone oxidoreductase subunit H 2 of Nitrosococcus oceani (strain ATCC 19707 / BCRC 17464 / JCM 30415 / NCIMB 11848 / C-107).